Here is a 92-residue protein sequence, read N- to C-terminus: Sarcosine oxidase subunit delta (92 aa).

Residues Cys7, Cys10, His57, and Cys61 each contribute to the Zn(2+) site.

The protein belongs to the SoxD family. In terms of assembly, heterotetramer composed of subunits alpha (SoxA), beta (SoxB), gamma (SoxG) and delta (SoxD).

Its subcellular location is the cytoplasm. It catalyses the reaction sarcosine + (6S)-5,6,7,8-tetrahydrofolate + O2 = (6R)-5,10-methylene-5,6,7,8-tetrahydrofolate + glycine + H2O2. The enzyme catalyses sarcosine + O2 + H2O = formaldehyde + glycine + H2O2. In the presence of tetrahydrofolate, catalyzes the oxidative demethylation of sarcosine to yield glycine, 5,10-methylenetetrahydrofolate and hydrogen peroxide. In the absence of tetrahydrofolate, catalyzes the oxidative demethylation of sarcosine to yield glycine, formaldehyde and hydrogen peroxide. The sequence is that of Sarcosine oxidase subunit delta (soxD) from Rhizobium meliloti (strain 1021) (Ensifer meliloti).